The chain runs to 1041 residues: Isoleucine--tRNA ligase (1041 aa).

Positions 53-63 (PFANGLPHYGH) match the 'HIGH' region motif. The 'KMSKS' region signature appears at 619–623 (KMSKS). Lysine 622 is an ATP binding site.

The protein belongs to the class-I aminoacyl-tRNA synthetase family. IleS type 2 subfamily. In terms of assembly, monomer. The cofactor is Zn(2+).

It localises to the cytoplasm. It catalyses the reaction tRNA(Ile) + L-isoleucine + ATP = L-isoleucyl-tRNA(Ile) + AMP + diphosphate. In terms of biological role, catalyzes the attachment of isoleucine to tRNA(Ile). As IleRS can inadvertently accommodate and process structurally similar amino acids such as valine, to avoid such errors it has two additional distinct tRNA(Ile)-dependent editing activities. One activity is designated as 'pretransfer' editing and involves the hydrolysis of activated Val-AMP. The other activity is designated 'posttransfer' editing and involves deacylation of mischarged Val-tRNA(Ile). This chain is Isoleucine--tRNA ligase (ileS), found in Mycobacterium tuberculosis (strain CDC 1551 / Oshkosh).